The following is a 405-amino-acid chain: Tryptophan synthase beta chain (405 aa).

Lys-98 carries the post-translational modification N6-(pyridoxal phosphate)lysine.

It belongs to the TrpB family. In terms of assembly, tetramer of two alpha and two beta chains. Pyridoxal 5'-phosphate serves as cofactor.

It catalyses the reaction (1S,2R)-1-C-(indol-3-yl)glycerol 3-phosphate + L-serine = D-glyceraldehyde 3-phosphate + L-tryptophan + H2O. The protein operates within amino-acid biosynthesis; L-tryptophan biosynthesis; L-tryptophan from chorismate: step 5/5. In terms of biological role, the beta subunit is responsible for the synthesis of L-tryptophan from indole and L-serine. The chain is Tryptophan synthase beta chain from Xylella fastidiosa (strain M12).